Reading from the N-terminus, the 272-residue chain is Alpha-tubulin N-acetyltransferase (272 aa).

In terms of domain architecture, N-acetyltransferase spans 1–186 (MEFRFNCHPL…NNFVVYEGFF (186 aa)). Acetyl-CoA-binding positions include 120–133 (FYVHESRQRGGLGR) and 156–165 (SEKLLGFLQK). Residues 216 to 244 (TTVGEQRRSSSQTRQQVVSPPVVQQPPVG) are disordered. Over residues 224-244 (SSSQTRQQVVSPPVVQQPPVG) the composition is skewed to low complexity.

It belongs to the acetyltransferase ATAT1 family.

It catalyses the reaction L-lysyl-[alpha-tubulin] + acetyl-CoA = N(6)-acetyl-L-lysyl-[alpha-tubulin] + CoA + H(+). Specifically acetylates 'Lys-40' in alpha-tubulin on the lumenal side of microtubules. Promotes microtubule destabilization and accelerates microtubule dynamics; this activity may be independent of acetylation activity. Acetylates alpha-tubulin with a slow enzymatic rate, due to a catalytic site that is not optimized for acetyl transfer. Enters the microtubule through each end and diffuses quickly throughout the lumen of microtubules. Acetylates only long/old microtubules because of its slow acetylation rate since it does not have time to act on dynamically unstable microtubules before the enzyme is released. The protein is Alpha-tubulin N-acetyltransferase of Aedes aegypti (Yellowfever mosquito).